Consider the following 32-residue polypeptide: Photosystem I reaction center subunit XII (32 aa).

Residues 10-27 (VVALISALVTGILALRLG) traverse the membrane as a helical segment.

It belongs to the PsaM family.

The protein resides in the plastid. It localises to the chloroplast thylakoid membrane. The protein is Photosystem I reaction center subunit XII of Zygnema circumcarinatum (Green alga).